The primary structure comprises 123 residues: Large ribosomal subunit protein bL12 (123 aa).

This sequence belongs to the bacterial ribosomal protein bL12 family. As to quaternary structure, homodimer. Part of the ribosomal stalk of the 50S ribosomal subunit. Forms a multimeric L10(L12)X complex, where L10 forms an elongated spine to which 2 to 4 L12 dimers bind in a sequential fashion. Binds GTP-bound translation factors.

Forms part of the ribosomal stalk which helps the ribosome interact with GTP-bound translation factors. Is thus essential for accurate translation. This is Large ribosomal subunit protein bL12 from Chromobacterium violaceum (strain ATCC 12472 / DSM 30191 / JCM 1249 / CCUG 213 / NBRC 12614 / NCIMB 9131 / NCTC 9757 / MK).